Consider the following 502-residue polypeptide: Putative diacyglycerol O-acyltransferase Rv1760 (502 aa).

Histidine 174 acts as the Proton acceptor in catalysis.

This sequence belongs to the long-chain O-acyltransferase family.

It catalyses the reaction an acyl-CoA + a 1,2-diacyl-sn-glycerol = a triacyl-sn-glycerol + CoA. The catalysed reaction is di-(9Z)-octadecenoylglycerol + (9Z)-octadecenoyl-CoA = 1,2,3-tri-(9Z-octadecenoyl)-glycerol + CoA. It functions in the pathway glycerolipid metabolism; triacylglycerol biosynthesis. In terms of biological role, catalyzes the terminal and only committed step in triacylglycerol synthesis by using diacylglycerol and fatty acyl CoA as substrates. Required for storage lipid synthesis. Its function is as follows. Upon expression in E.coli functions weakly as a triacylglycerol synthase, making triacylglycerol (TG) from diolein and long-chain fatty acyl-CoA. Has very weak wax synthase activity, incorporating palmityl alcohol into wax esters in the presence of palmitoyl-CoA. The sequence is that of Putative diacyglycerol O-acyltransferase Rv1760 from Mycobacterium tuberculosis (strain ATCC 25618 / H37Rv).